We begin with the raw amino-acid sequence, 100 residues long: Urease subunit gamma (100 aa).

It belongs to the urease gamma subunit family. Heterotrimer of UreA (gamma), UreB (beta) and UreC (alpha) subunits. Three heterotrimers associate to form the active enzyme.

The protein resides in the cytoplasm. The catalysed reaction is urea + 2 H2O + H(+) = hydrogencarbonate + 2 NH4(+). It functions in the pathway nitrogen metabolism; urea degradation; CO(2) and NH(3) from urea (urease route): step 1/1. The chain is Urease subunit gamma from Micrococcus luteus (strain ATCC 4698 / DSM 20030 / JCM 1464 / CCM 169 / CCUG 5858 / IAM 1056 / NBRC 3333 / NCIMB 9278 / NCTC 2665 / VKM Ac-2230) (Micrococcus lysodeikticus).